We begin with the raw amino-acid sequence, 497 residues long: Glycerol kinase 2 (497 aa).

Thr-13 lines the ADP pocket. ATP contacts are provided by Thr-13, Thr-14, and Ser-15. Thr-13 contributes to the sn-glycerol 3-phosphate binding site. Arg-17 is an ADP binding site. Sn-glycerol 3-phosphate is bound by residues Arg-83, Glu-84, Tyr-134, and Asp-241. The glycerol site is built by Arg-83, Glu-84, Tyr-134, Asp-241, and Gln-242. ADP-binding residues include Thr-263 and Gly-305. 4 residues coordinate ATP: Thr-263, Gly-305, Gln-309, and Gly-406. Residues Gly-406 and Asn-410 each coordinate ADP.

This sequence belongs to the FGGY kinase family.

The catalysed reaction is glycerol + ATP = sn-glycerol 3-phosphate + ADP + H(+). Its pathway is polyol metabolism; glycerol degradation via glycerol kinase pathway; sn-glycerol 3-phosphate from glycerol: step 1/1. Functionally, key enzyme in the regulation of glycerol uptake and metabolism. Catalyzes the phosphorylation of glycerol to yield sn-glycerol 3-phosphate. In Sulfolobus acidocaldarius (strain ATCC 33909 / DSM 639 / JCM 8929 / NBRC 15157 / NCIMB 11770), this protein is Glycerol kinase 2.